An 803-amino-acid polypeptide reads, in one-letter code: Ras GTPase-activating protein 4 (803 aa).

C2 domains follow at residues 1 to 105 (MAKR…SGWA) and 116 to 232 (VQGE…EGWF). The Ca(2+) site is built by Asp-21, Asp-27, Asp-74, Asp-76, Ser-79, Asp-82, Asp-149, Asp-155, Asp-202, Asp-204, Ser-207, and Asp-210. Residues 318 to 546 (GLAKDFLDLL…AQLKDFITKL (229 aa)) form the Ras-GAP domain. A PH domain is found at 566–673 (PPVKEGPLFI…WLSALRKVSI (108 aa)). Residues 675–711 (NTGLLGSYHPGVFRGDKWSCCHQKEKTGQGCDKTRSR) form a Btk-type zinc finger. His-683, Cys-694, Cys-695, and Cys-705 together coordinate Zn(2+). The disordered stretch occupies residues 781 to 803 (EAHSSSPAGSPPSEPNCLLELQT).

Ca(2+) is required as a cofactor. In terms of tissue distribution, widely expressed.

The protein resides in the cytoplasm. The protein localises to the cytosol. It is found in the cell membrane. Functionally, ca(2+)-dependent Ras GTPase-activating protein, that switches off the Ras-MAPK pathway following a stimulus that elevates intracellular calcium. Functions as an adaptor for Cdc42 and Rac1 during FcR-mediated phagocytosis. The sequence is that of Ras GTPase-activating protein 4 (RASA4) from Homo sapiens (Human).